A 368-amino-acid polypeptide reads, in one-letter code: Protein L-Myc (368 aa).

Disordered stretches follow at residues 39–79, 112–179, and 218–295; these read PPTS…RGHS, RLAP…EKRR, and FPPE…FLER. Positions 135 to 147 are enriched in polar residues; that stretch reads LEASNPAPATQCQ. Over residues 247–258 the composition is skewed to acidic residues; the sequence is EEEEEEEEEEEI. Residues 283-294 show a composition bias toward basic and acidic residues; it reads DVTKRKNHNFLE. One can recognise a bHLH domain in the interval 285-337; sequence TKRKNHNFLERKRRNDLRSRFLALRDQVPTLASCSKAPKVVILSKALEYLQAL. The leucine-zipper stretch occupies residues 337–365; that stretch reads LVGAEKKMATEKRQLRCRQQQLQKRIAYL.

In terms of assembly, efficient DNA binding requires dimerization with another bHLH protein. Binds DNA as a heterodimer with MAX.

The protein resides in the nucleus. In Mus musculus (Mouse), this protein is Protein L-Myc (Mycl).